Here is an 863-residue protein sequence, read N- to C-terminus: Oleate activated transcription factor 3 (863 aa).

Positions 19–47 (CTNCKKRKSKCDRTKPCGTCVRLGDVDSC) form a DNA-binding region, zn(2)-C6 fungal-type. The segment covering 52 to 63 (DSSGQPESSPSL) has biased composition (polar residues). Positions 52-99 (DSSGQPESSPSLNDADPLRKQSTPAERISPGFIKKRRSSQTRQDEDHW) are disordered.

It belongs to the OAF3 family.

Its subcellular location is the cytoplasm. The protein localises to the nucleus. It is found in the mitochondrion. In terms of biological role, transcriptional inhibitor with a significantly increased number of target genes in response to oleate. This is Oleate activated transcription factor 3 (OAF3) from Saccharomyces cerevisiae (strain YJM789) (Baker's yeast).